Reading from the N-terminus, the 94-residue chain is Phosphoribosyl-ATP pyrophosphatase (94 aa).

It belongs to the PRA-PH family.

It localises to the cytoplasm. It carries out the reaction 1-(5-phospho-beta-D-ribosyl)-ATP + H2O = 1-(5-phospho-beta-D-ribosyl)-5'-AMP + diphosphate + H(+). It participates in amino-acid biosynthesis; L-histidine biosynthesis; L-histidine from 5-phospho-alpha-D-ribose 1-diphosphate: step 2/9. The chain is Phosphoribosyl-ATP pyrophosphatase from Saccharolobus islandicus (strain M.16.27) (Sulfolobus islandicus).